Reading from the N-terminus, the 85-residue chain is Toxin Cll6 (85 aa).

A signal peptide spans 1–19 (MNSLLMIIGCLVLIGTVWT). The 64-residue stretch at 20–83 (KEGYLVNMKT…TWPLPGKSCS (64 aa)) folds into the LCN-type CS-alpha/beta domain. 4 disulfide bridges follow: cysteine 31–cysteine 82, cysteine 35–cysteine 58, cysteine 44–cysteine 63, and cysteine 48–cysteine 65. Serine 83 bears the Serine amide mark.

The protein belongs to the long (4 C-C) scorpion toxin superfamily. Sodium channel inhibitor family. Beta subfamily. As to expression, expressed by the venom gland.

Its subcellular location is the secreted. Beta toxins bind voltage-independently at site-4 of sodium channels (Nav) and shift the voltage of activation toward more negative potentials thereby affecting sodium channel activation and promoting spontaneous and repetitive firing. The sequence is that of Toxin Cll6 from Centruroides limpidus (Mexican scorpion).